The sequence spans 561 residues: Oxygen-dependent choline dehydrogenase (561 aa).

Aspartate 6–glutamate 35 lines the FAD pocket. Histidine 475 acts as the Proton acceptor in catalysis.

Belongs to the GMC oxidoreductase family. FAD is required as a cofactor.

The catalysed reaction is choline + A = betaine aldehyde + AH2. It catalyses the reaction betaine aldehyde + NAD(+) + H2O = glycine betaine + NADH + 2 H(+). It participates in amine and polyamine biosynthesis; betaine biosynthesis via choline pathway; betaine aldehyde from choline (cytochrome c reductase route): step 1/1. Its function is as follows. Involved in the biosynthesis of the osmoprotectant glycine betaine. Catalyzes the oxidation of choline to betaine aldehyde and betaine aldehyde to glycine betaine at the same rate. This chain is Oxygen-dependent choline dehydrogenase, found in Pseudomonas aeruginosa (strain LESB58).